Here is a 568-residue protein sequence, read N- to C-terminus: Arginine--tRNA ligase (568 aa).

The short motif at 129-139 (ANPTGPLHIGH) is the 'HIGH' region element.

The protein belongs to the class-I aminoacyl-tRNA synthetase family. Monomer.

It localises to the cytoplasm. The enzyme catalyses tRNA(Arg) + L-arginine + ATP = L-arginyl-tRNA(Arg) + AMP + diphosphate. The protein is Arginine--tRNA ligase of Wolbachia pipientis wMel.